Reading from the N-terminus, the 449-residue chain is Glucose-6-phosphate isomerase (449 aa).

Residue Glu291 is the Proton donor of the active site. Catalysis depends on residues His312 and Lys426.

This sequence belongs to the GPI family.

It is found in the cytoplasm. It carries out the reaction alpha-D-glucose 6-phosphate = beta-D-fructose 6-phosphate. The protein operates within carbohydrate biosynthesis; gluconeogenesis. Its pathway is carbohydrate degradation; glycolysis; D-glyceraldehyde 3-phosphate and glycerone phosphate from D-glucose: step 2/4. Its function is as follows. Catalyzes the reversible isomerization of glucose-6-phosphate to fructose-6-phosphate. This is Glucose-6-phosphate isomerase from Clostridium botulinum (strain Alaska E43 / Type E3).